Reading from the N-terminus, the 272-residue chain is Prohibitin 1 (272 aa).

Ala2 carries the post-translational modification N-acetylalanine. At Thr91 the chain carries Phosphothreonine. N6-acetyllysine is present on residues Lys128 and Lys186. Residues 177–211 (KEFTEAVEAKQVAQQEAERARFVVEKAEQQKKAAI) are a coiled coil. At Lys202 the chain carries N6-acetyllysine; alternate. N6-succinyllysine; alternate is present on Lys202. Tyr249 is subject to Phosphotyrosine.

This sequence belongs to the prohibitin family. As to quaternary structure, interacts with PHB2. Interacts with STOML2. Interacts with CD86 (via cytoplasmic domain); the interactions increases after priming with CD40. In terms of assembly, (Microbial infection) Interacts with human enterovirus 71/EV-71 capsid protein VP0, protein 3CD and protease 3C. In terms of tissue distribution, widely expressed in different tissues.

The protein resides in the mitochondrion inner membrane. Its subcellular location is the nucleus. It localises to the cell membrane. The protein localises to the cytoplasm. Its activity is regulated as follows. Target of the anti-cancer drug Rocaglamide (Roc-A). Protein with pleiotropic attributes mediated in a cell-compartment- and tissue-specific manner, which include the plasma membrane-associated cell signaling functions, mitochondrial chaperone, and transcriptional co-regulator of transcription factors in the nucleus. Plays a role in adipose tissue and glucose homeostasis in a sex-specific manner. Contributes to pulmonary vascular remodeling by accelerating proliferation of pulmonary arterial smooth muscle cells. Functionally, in the mitochondria, together with PHB2, forms large ring complexes (prohibitin complexes) in the inner mitochondrial membrane (IMM) and functions as a chaperone protein that stabilizes mitochondrial respiratory enzymes and maintains mitochondrial integrity in the IMM, which is required for mitochondrial morphogenesis, neuronal survival, and normal lifespan. The prohibitin complex, with DNAJC19, regulates cardiolipin remodeling and the protein turnover of OMA1 in a cardiolipin-binding manner. Regulates mitochondrial respiration activity playing a role in cellular aging. The prohibitin complex plays a role of mitophagy receptor involved in targeting mitochondria for autophagic degradation. Involved in mitochondrial-mediated antiviral innate immunity, activates RIG-I-mediated signal transduction and production of IFNB1 and pro-inflammatory cytokine IL6. Its function is as follows. In the nucleus, acts as a transcription coregulator, enhances promoter binding by TP53, a transcription factor it activates, but reduces the promoter binding by E2F1, a transcription factor it represses. Interacts with STAT3 to affect IL17 secretion in T-helper Th17 cells. In terms of biological role, in the plasma membrane, cooperates with CD86 to mediate CD86-signaling in B lymphocytes that regulates the level of IgG1 produced through the activation of distal signaling intermediates. Upon CD40 engagement, required to activate NF-kappa-B signaling pathway via phospholipase C and protein kinase C activation. (Microbial infection) In neuronal cells, cell surface-expressed PHB1 is involved in human enterovirus 71/EV-71 entry into neuronal cells specifically, while membrane-bound mitochondrial PHB1 associates with the virus replication complex and facilitates viral replication. May serve as a receptor for EV71. The sequence is that of Prohibitin 1 (Phb1) from Mus musculus (Mouse).